Here is a 319-residue protein sequence, read N- to C-terminus: uncharacterized protein (319 aa).

9 helical membrane-spanning segments follow: residues 11-31, 43-63, 83-103, 108-128, 134-154, 195-215, 220-240, 260-280, and 284-304; these read GLWAGFIAFVIAMLALDLGVF, ALGWSALWVSLALVFGAGVWW, LSVDNIFVFVVIFSALRIPAL, VLFWGILSALALRAIMIFAGV, FHWLIYVFGGFLIITGVKLFL, LATPLLMALLLVEASDILFAL, AIFAVTTDPFIVFTSNIFAIL, KVGLSAVLVFVGTKMAIIDFV, and PEVSLSVIAGLLGASIVASLI.

This sequence belongs to the TerC family.

Its subcellular location is the cell membrane. This is an uncharacterized protein from Myxococcus xanthus.